Consider the following 269-residue polypeptide: 4-chlorobenzoyl coenzyme A dehalogenase (269 aa).

Residues R24 and 62 to 67 (AGFYLR) contribute to the substrate site. The active-site Proton acceptor is H90. G114 lines the substrate pocket. The active-site Nucleophile is D145. Residue R257 coordinates substrate.

Belongs to the enoyl-CoA hydratase/isomerase family. As to quaternary structure, homotetramer. Homotetramer, homooctamer and larger multimers. Homotrimer.

The enzyme catalyses 4-chlorobenzoyl-CoA + H2O = 4-hydroxybenzoyl-CoA + chloride + H(+). The protein operates within xenobiotic degradation; 4-chlorobenzoate degradation; 4-hydroxybenzoate from 4-chlorobenzoate: step 2/3. Its activity is regulated as follows. Inactivated by 1 mM Ag(+) and by 5 mM Cu(2+). Partially inhibited by 5 mM Zn(2+), Mn(2+), Co(2+), Fe(2+) and Ni(2+). Unaffected by 10 mM Na(+), K(+) and Li(+) and by 0.5 mM Mg(2+), Mn(2+), Fe(2+), Ca(2+), Co(2+) and Zn(2+). Inhibited by the sulfhydryl blocking agent 5,5'-dithio-bis-(2-nitrobenzoate), SDS and N-bromosuccinimide. Unaffected by sodium azide and EDTA. Inactivated following treatment with diethyl pyrocarbonate; this inactivation is reversible by treatment with hydroxylamine. Functionally, dehalogenates 4-chlorobenzoyl-CoA, 4-iodobenzoyl-CoA and 4-bromobenzoyl-CoA, but not 4-fluorobenzoyl-CoA. Inactive towards crotonyl-CoA, alpha-methylcrotonyl-CoA and beta-methylcrotonyl-CoA. The chain is 4-chlorobenzoyl coenzyme A dehalogenase from Pseudomonas sp. (strain CBS-3).